We begin with the raw amino-acid sequence, 405 residues long: Arginine biosynthesis bifunctional protein ArgJ (405 aa).

The substrate site is built by Thr-152, Lys-178, Thr-189, Glu-276, Asn-400, and Thr-405. Thr-189 (nucleophile) is an active-site residue.

Belongs to the ArgJ family. Heterotetramer of two alpha and two beta chains.

Its subcellular location is the cytoplasm. It catalyses the reaction N(2)-acetyl-L-ornithine + L-glutamate = N-acetyl-L-glutamate + L-ornithine. The enzyme catalyses L-glutamate + acetyl-CoA = N-acetyl-L-glutamate + CoA + H(+). Its pathway is amino-acid biosynthesis; L-arginine biosynthesis; L-ornithine and N-acetyl-L-glutamate from L-glutamate and N(2)-acetyl-L-ornithine (cyclic): step 1/1. It functions in the pathway amino-acid biosynthesis; L-arginine biosynthesis; N(2)-acetyl-L-ornithine from L-glutamate: step 1/4. Functionally, catalyzes two activities which are involved in the cyclic version of arginine biosynthesis: the synthesis of N-acetylglutamate from glutamate and acetyl-CoA as the acetyl donor, and of ornithine by transacetylation between N(2)-acetylornithine and glutamate. The protein is Arginine biosynthesis bifunctional protein ArgJ of Pseudomonas fluorescens (strain ATCC BAA-477 / NRRL B-23932 / Pf-5).